The sequence spans 227 residues: tRNA pseudouridine synthase B (227 aa).

Aspartate 42 functions as the Nucleophile in the catalytic mechanism.

Belongs to the pseudouridine synthase TruB family. Type 1 subfamily.

The catalysed reaction is uridine(55) in tRNA = pseudouridine(55) in tRNA. In terms of biological role, responsible for synthesis of pseudouridine from uracil-55 in the psi GC loop of transfer RNAs. In Ureaplasma parvum serovar 3 (strain ATCC 27815 / 27 / NCTC 11736), this protein is tRNA pseudouridine synthase B.